We begin with the raw amino-acid sequence, 490 residues long: Nuclear transcription factor Y subunit beta (490 aa).

Residues 1–48 (MSGNEDFIYDDNSSSSISNQTDGGGGGGSSNNNSGGNANNNNNEGDRE) form a disordered region. The span at 30–43 (SNNNSGGNANNNNN) shows a compositional bias: low complexity. Residues 53–59 (LPIANII) mediate DNA binding. Positions 80-91 (VQDCVSEFISFI) are subunit association domain (SAD). Disordered stretches follow at residues 139 to 195 (EKNS…QQQQ) and 221 to 264 (QQQQ…NQQY). Residues 181–195 (QQQQQPPQVQQQQQQ) show a composition bias toward low complexity. Residues 188-219 (QVQQQQQQQQQQQQQQLQQQQQLQQHQQQQLQ) are a coiled coil. Residues 269-307 (QQQQQQQQQQQQQQQQQQQQQQQQQQQQQQQQQQQQQVQ) adopt a coiled-coil conformation. 2 disordered regions span residues 325-370 (NQQA…QHLQ) and 399-490 (QFSN…PSTS). The segment covering 399–468 (QFSNNNNNNN…GNSLHNSGNS (70 aa)) has biased composition (low complexity). The segment covering 478–490 (PYISTNPEYPSTS) has biased composition (polar residues).

Belongs to the NFYB/HAP3 subunit family. In terms of assembly, heterotrimeric transcription factor composed of three components, nfyA, nfyB and nfyC. nfyB and nfyC must interact and dimerize for nfyA association and DNA binding.

The protein resides in the nucleus. Functionally, component of the NF-Y/HAP transcription factor complex. The NF-Y complex stimulates the transcription of various genes by recognizing and binding to a CCAAT motif in promoters. The protein is Nuclear transcription factor Y subunit beta (nfyB) of Dictyostelium discoideum (Social amoeba).